A 147-amino-acid chain; its full sequence is MSSIGAGAGGAVVGAAVAAVAVGGGAPPHVLAVDDSSVDRAVIAGILRSSRFRVTAVDSGKRALELLGSEPNVSMIITDYWMPEMTGYELLKKVKESSKLKKIPVVIMSSENVPTRISRCLEEGAEDFLVKPVRPSDVSRLFSRVLP.

In terms of domain architecture, Response regulatory spans 29–146 (HVLAVDDSSV…DVSRLFSRVL (118 aa)). At Asp79 the chain carries 4-aspartylphosphate.

The protein belongs to the ARR family. Type-A subfamily. In terms of processing, two-component system major event consists of a His-to-Asp phosphorelay between a sensor histidine kinase (HK) and a response regulator (RR). In plants, the His-to-Asp phosphorelay involves an additional intermediate named Histidine-containing phosphotransfer protein (HPt). This multistep phosphorelay consists of a His-Asp-His-Asp sequential transfer of a phosphate group between first a His and an Asp of the HK protein, followed by the transfer to a conserved His of the HPt protein and finally the transfer to an Asp in the receiver domain of the RR protein.

In terms of biological role, functions as a response regulator involved in His-to-Asp phosphorelay signal transduction system. Phosphorylation of the Asp residue in the receiver domain activates the ability of the protein to promote the transcription of target genes. Type-A response regulators seem to act as negative regulators of the cytokinin signaling. The protein is Two-component response regulator ORR11 of Oryza sativa subsp. indica (Rice).